We begin with the raw amino-acid sequence, 298 residues long: Inosose dehydratase (298 aa).

This sequence belongs to the IolE/MocC family. Glutathione serves as cofactor. The cofactor is Co(2+). It depends on Mn(2+) as a cofactor.

It catalyses the reaction scyllo-inosose = 3D-3,5/4-trihydroxycyclohexane-1,2-dione + H2O. It functions in the pathway polyol metabolism; myo-inositol degradation into acetyl-CoA; acetyl-CoA from myo-inositol: step 2/7. In terms of biological role, catalyzes the dehydration of inosose (2-keto-myo-inositol, 2KMI or 2,4,6/3,5-pentahydroxycyclohexanone) to 3D-(3,5/4)-trihydroxycyclohexane-1,2-dione (D-2,3-diketo-4-deoxy-epi-inositol). The polypeptide is Inosose dehydratase (Clostridium tetani (strain Massachusetts / E88)).